A 3828-amino-acid chain; its full sequence is Histone-lysine N-methyltransferase trithorax (3828 aa).

Disordered regions lie at residues 25–179 (EDEA…AAAA), 356–390 (AVKSSGSSPNPNHNPNAVAGSTSAAAPGAPTATKQ), and 512–589 (FRKQ…RSTR). Residues 29–57 (ASAAAAAAAATAATTEQHQQSEQSAGSSA) show a composition bias toward low complexity. Residues 77–89 (AATSGNRGASSGA) are compositionally biased toward polar residues. Positions 101 to 114 (GNGSSTGSKTTNGG) are enriched in low complexity. Residues 152–165 (DGTEDTNNDDDDDS) show a composition bias toward acidic residues. A compositionally biased stretch (low complexity) spans 359-387 (SSGSSPNPNHNPNAVAGSTSAAAPGAPTA). The segment covering 513–523 (RKQEPQHKTPE) has biased composition (basic and acidic residues). Residues 524 to 553 (DNDDDGSASSDAIEDDEDIDDDDAEENEEA) show a composition bias toward acidic residues. Positions 554–581 (ASEKSAETTASVDEKEADDRQLVMDKHF) are enriched in basic and acidic residues. Positions 725–839 (ASTCAVCSAP…AGHRSRLSAI (115 aa)) form a DNA-binding region, nuclear receptor. Disordered regions lie at residues 933-1036 (ESKE…SAVP), 1075-1094 (ELAAAEAGPAPTTTTTTTSP), and 1131-1170 (AQPAVKSVLESRSSKSNTQTEAKKTPATSGSSKGKVTTRN). The segment covering 960 to 974 (AKQDKEKARELEAEK) has biased composition (basic and acidic residues). Low complexity-rich tracts occupy residues 998 to 1022 (ASTTTTVSAASSSTSHTSSAATNSS) and 1078 to 1094 (AAEAGPAPTTTTTTTSP). Residues 1140–1170 (ESRSSKSNTQTEAKKTPATSGSSKGKVTTRN) show a composition bias toward polar residues. 3 consecutive PHD-type zinc fingers follow at residues 1251–1334 (RALC…CTVC), 1335–1380 (YTCN…CLKC), and 1408–1469 (GNFC…CARR). Residues 1483–1644 (AVMEEFKSSL…SEQFPWFQNE (162 aa)) enclose the Bromo domain. The C2HC pre-PHD-type zinc finger occupies 1708-1748 (TRVCLFCRKSGEGLSGEEARLLYCGHDCWVHINCAMWSAEV). The PHD-type 4 zinc finger occupies 1769–1816 (IKCTVCGNRGATVGCNVKSCGEHYHYPCARTIDCAFLTDKSMYCPAHA). One can recognise an FYR N-terminal domain in the interval 1856–1913 (KVQFHIGSVAVRQLGSIVPRFSDSFEAIVPINFLCSRLYWSSKEPWKIVEYTVRTTIQ). Disordered regions lie at residues 2252 to 2272 (CEPMSTSESESETATGTAQLS), 2464 to 2510 (AHQK…QQQQ), 2826 to 2848 (RNTNANKSPISVLSKVQPQPQQS), 2897 to 2973 (RQQQ…SPAA), 2988 to 3031 (APAP…QLSM), 3117 to 3178 (ASAN…VPAG), 3314 to 3338 (NGSGGGAAEGIGQVDDAEEDEDDDD), and 3457 to 3487 (KLDVPQQQPDTVPPNVVPTAAAPQQPPPMRD). Low complexity-rich tracts occupy residues 2253 to 2268 (EPMSTSESESETATGT), 2483 to 2510 (QGQQQQQRHQQHQQHQQHQQQQQQQQQQ), and 2836 to 2848 (SVLSKVQPQPQQS). Polar residues predominate over residues 2897 to 2917 (RQQQANELKNKQAAGQQTGST). Low complexity-rich tracts occupy residues 2956-2973 (ATSAASMQHHQQQQSPAA), 2988-2997 (APAPQPQQQE), 3005-3031 (LHQQQQQQQQQQQHMQQHQQQQQQLSM), and 3117-3132 (ASANNSSNSNVTQQNS). The segment covering 3148–3164 (QQRQEPTPLSNDVVVQS) has biased composition (polar residues). Residues 3328–3338 (DDAEEDEDDDD) are compositionally biased toward acidic residues. Positions 3493 to 3577 (GPHLLYEIQS…EKCVKYTPKY (85 aa)) constitute an FYR C-terminal domain. The region spanning 3690 to 3806 (DYVGVFRSHI…QGEELTYDYK (117 aa)) is the SET domain. Residues H3700, R3702, Y3744, and 3767–3768 (NH) each bind S-adenosyl-L-methionine. C3770, C3816, C3818, and C3823 together coordinate Zn(2+). Residues 3812 to 3828 (EKIPCSCGSKRCRKYLN) form the Post-SET domain.

It belongs to the class V-like SAM-binding methyltransferase superfamily. Histone-lysine methyltransferase family. TRX/MLL subfamily. In terms of assembly, interacts with ash1 via its SET domain.

It is found in the nucleus. The catalysed reaction is L-lysyl(9)-[histone H3] + 3 S-adenosyl-L-methionine = N(6),N(6),N(6)-trimethyl-L-lysyl(9)-[histone H3] + 3 S-adenosyl-L-homocysteine + 3 H(+). In terms of biological role, histone methyltransferase that methylates 'Lys-4' of histone H3 (H3K4me). H3K4me represents a specific tag for epigenetic transcriptional activation. Functions in segment determination through interaction with genes of bithorax (BX-C) and antennapedia (ANT-C) complexes. Acts as an activator of BX-C. Involved in the very early regulation of homeotic genes expressed only in the posterior region of the embryo. In Drosophila virilis (Fruit fly), this protein is Histone-lysine N-methyltransferase trithorax (trx).